The sequence spans 180 residues: Acireductone dioxygenase (180 aa).

Fe(2+)-binding residues include H97, H99, E103, and H141. Ni(2+)-binding residues include H97, H99, E103, and H141.

The protein belongs to the acireductone dioxygenase (ARD) family. Monomer. The cofactor is Fe(2+). Ni(2+) serves as cofactor.

It catalyses the reaction 1,2-dihydroxy-5-(methylsulfanyl)pent-1-en-3-one + O2 = 3-(methylsulfanyl)propanoate + CO + formate + 2 H(+). The catalysed reaction is 1,2-dihydroxy-5-(methylsulfanyl)pent-1-en-3-one + O2 = 4-methylsulfanyl-2-oxobutanoate + formate + 2 H(+). Its pathway is amino-acid biosynthesis; L-methionine biosynthesis via salvage pathway; L-methionine from S-methyl-5-thio-alpha-D-ribose 1-phosphate: step 5/6. In terms of biological role, catalyzes 2 different reactions between oxygen and the acireductone 1,2-dihydroxy-3-keto-5-methylthiopentene (DHK-MTPene) depending upon the metal bound in the active site. Fe-containing acireductone dioxygenase (Fe-ARD) produces formate and 2-keto-4-methylthiobutyrate (KMTB), the alpha-ketoacid precursor of methionine in the methionine recycle pathway. Ni-containing acireductone dioxygenase (Ni-ARD) produces methylthiopropionate, carbon monoxide and formate, and does not lie on the methionine recycle pathway. This is Acireductone dioxygenase from Klebsiella pneumoniae subsp. pneumoniae (strain ATCC 700721 / MGH 78578).